A 417-amino-acid polypeptide reads, in one-letter code: MADIKNYTLNFGPQHPAAHGVLRLVLELDGEVIQRADPHIGLLHRATEKLAEQKTWIQSVPYMDRLDYVSMMVNEHAYVMAIERLLGLEVPLRAQYIRVMFDEITRIMNHLMWIGSHALDVGAMAVFLYAFREREDLFDMYEAVSGARMHAAYYRPGGVYRDLPDTMPQYKASKVRNEKALAALNQTRSGSLLDFIEDFTNRFPKYVDEYETLLTDNRIWKQRLVGIGVVSPERALNKGFSGAMLRGSGIEWDVRKKQPYEVYDRIDFDIPVGVNGDCYDRYLVRVEEMRQSNRIIRQCIEWLRKNPGPVITDNHKVAPPSRVDMKTNMEELIHHFKLFTEGMHVPEGEAYAAVEHPKGEFGIYAISDGANKPYRLKIRAPGFVHLAALDEMAKGHMIADAVTIIGTQDIVFGEIDR.

This sequence belongs to the complex I 49 kDa subunit family. NDH-1 is composed of 14 different subunits. Subunits NuoB, C, D, E, F, and G constitute the peripheral sector of the complex.

It is found in the cell inner membrane. It catalyses the reaction a quinone + NADH + 5 H(+)(in) = a quinol + NAD(+) + 4 H(+)(out). Its function is as follows. NDH-1 shuttles electrons from NADH, via FMN and iron-sulfur (Fe-S) centers, to quinones in the respiratory chain. The immediate electron acceptor for the enzyme in this species is believed to be ubiquinone. Couples the redox reaction to proton translocation (for every two electrons transferred, four hydrogen ions are translocated across the cytoplasmic membrane), and thus conserves the redox energy in a proton gradient. This is NADH-quinone oxidoreductase subunit D from Ralstonia pickettii (strain 12J).